We begin with the raw amino-acid sequence, 117 residues long: Ubiquitin-like protein pmt3/smt3 (117 aa).

The tract at residues 1-37 (MSESPSANISDADKSAITPTTGDTSQQDVKPSTEHIN) is disordered. The segment covering 17–30 (ITPTTGDTSQQDVK) has biased composition (polar residues). Residues 35 to 115 (HINLKVVGQD…LEQLGGCTHL (81 aa)) enclose the Ubiquitin-like domain. G111 is covalently cross-linked (Glycyl lysine isopeptide (Gly-Lys) (interchain with K-? in acceptor proteins)). The propeptide occupies 112–117 (CTHLCL).

This sequence belongs to the ubiquitin family. SUMO subfamily. As to quaternary structure, interacts with rfp1.

Its subcellular location is the nucleus. Functionally, required for chromosome segregation where it may be involved in microtubule assembly. Loss of smt3 leads to an increase in telomere length. The chain is Ubiquitin-like protein pmt3/smt3 (pmt3) from Schizosaccharomyces pombe (strain 972 / ATCC 24843) (Fission yeast).